The following is a 369-amino-acid chain: uncharacterized protein (369 aa).

Transmembrane regions (helical) follow at residues 25–45, 47–67, 119–139, 152–172, 206–226, 235–255, 272–292, 296–316, and 323–343; these read QFVA…WYDW, FCLL…FVPA, LNIV…FNLM, LSGF…FSAL, HALN…LLFV, LKPL…SLYL, PIAL…GVFG, FGIY…TVFL, and LIFF…FTVA.

It to B.subtilis ComEC.

It is found in the cell membrane. This is an uncharacterized protein from Mycoplasma genitalium (strain ATCC 33530 / DSM 19775 / NCTC 10195 / G37) (Mycoplasmoides genitalium).